Consider the following 556-residue polypeptide: Formate--tetrahydrofolate ligase (556 aa).

65–72 contacts ATP; the sequence is TPAGEGKS.

The protein belongs to the formate--tetrahydrofolate ligase family.

It catalyses the reaction (6S)-5,6,7,8-tetrahydrofolate + formate + ATP = (6R)-10-formyltetrahydrofolate + ADP + phosphate. Its pathway is one-carbon metabolism; tetrahydrofolate interconversion. This is Formate--tetrahydrofolate ligase from Streptococcus pneumoniae (strain Hungary19A-6).